Reading from the N-terminus, the 695-residue chain is GRB2-associated-binding protein 1 (695 aa).

Serine 2 carries the N-acetylserine modification. Positions glutamate 5–glycine 116 constitute a PH domain. Residues alanine 204–lysine 229 form a disordered region. The span at proline 206–lysine 229 shows a compositional bias: polar residues. Phosphoserine is present on residues serine 251, serine 253, serine 266, and serine 304. A disordered region spans residues serine 306–asparagine 387. Polar residues predominate over residues glycine 314 to leucine 334. Threonine 388 carries the post-translational modification Phosphothreonine. A phosphoserine mark is found at serine 403 and serine 455. Positions proline 453–aspartate 659 are disordered. 2 stretches are compositionally biased toward polar residues: residues proline 457–glutamate 466 and phenylalanine 605–methionine 617. Tyrosine 628 carries the phosphotyrosine modification. Threonine 639 is subject to Phosphothreonine. Serine 652 bears the Phosphoserine mark. Position 660 is a phosphotyrosine (tyrosine 660). Residues leucine 671–lysine 695 are disordered. Positions serine 673–threonine 685 are enriched in basic and acidic residues. Residue serine 684 is modified to Phosphoserine. The segment covering glutamate 686–lysine 695 has biased composition (polar residues).

It belongs to the GAB family. As to quaternary structure, identified in a complex containing FRS2, GRB2, GAB1, PIK3R1 and SOS1. Forms a tripartite complex containing GAB1, METTL13 and SPRY2. Within the complex interacts with METTL13. Interacts with GRB2 and with other SH2-containing proteins. Interacts with phosphorylated LAT2. Interacts with PTPRJ. Interacts (phosphorylated) with PTPN11. Interacts with HCK. Phosphorylated on tyrosine residue(s) by the epidermal growth factor receptor (EGFR) and the insulin receptor (INSR). Tyrosine phosphorylation of GAB1 mediates interaction with several proteins that contain SH2 domains. Phosphorylated on tyrosine residues by HCK upon IL6 signaling. Phosphorylated in response to FGFR1 activation. As to expression, expressed in the inner ear (at protein level). Expression is detected in the cochlear duct, spiral limbus region, efferent and afferent nerves, and in spiral ganglion neurons (at protein level).

In terms of biological role, adapter protein that plays a role in intracellular signaling cascades triggered by activated receptor-type kinases. Plays a role in FGFR1 signaling. Probably involved in signaling by the epidermal growth factor receptor (EGFR) and the insulin receptor (INSR). Involved in the MET/HGF-signaling pathway. In Mus musculus (Mouse), this protein is GRB2-associated-binding protein 1 (Gab1).